We begin with the raw amino-acid sequence, 237 residues long: Fluoroquinolones export permease protein MT2761 (237 aa).

Helical transmembrane passes span Phe20–Val40, Tyr49–Phe69, Val96–Gly116, Leu119–Ser139, Val147–Val167, and Leu199–Cys219.

In terms of assembly, the complex is composed of 2 ATP-binding proteins and 2 transmembrane proteins.

The protein localises to the cell membrane. Functionally, part of the ABC transporter complex involved in fluoroquinolones export. Probably responsible for the translocation of the substrate across the membrane. The sequence is that of Fluoroquinolones export permease protein MT2761 from Mycobacterium tuberculosis (strain CDC 1551 / Oshkosh).